The chain runs to 646 residues: Protein kinase YegI (646 aa).

In terms of domain architecture, Protein kinase spans 13–300 (VTPGRELGKG…KAWVAALDLL (288 aa)). ATP is bound by residues 19–27 (LGKGGEGAV) and Lys39. Catalysis depends on Asp141, which acts as the Proton acceptor.

Post-translationally, autophosphorylated.

Its function is as follows. Probable serine/threonine kinase. The chain is Protein kinase YegI (yegI) from Escherichia coli O157:H7.